A 206-amino-acid chain; its full sequence is Large ribosomal subunit protein bL25 (206 aa).

A bL25 domain region spans residues 1–91; it reads MEYRLKAYYR…RPEHVDFFVL (91 aa). Residues 92-206 are CTC domain; sequence SDEPVEMYVP…IKKGKEEEEE (115 aa). Residues 184-206 are disordered; the sequence is AEEAAAEVAEPEVIKKGKEEEEE. Positions 195–206 are enriched in basic and acidic residues; the sequence is EVIKKGKEEEEE.

It belongs to the bacterial ribosomal protein bL25 family. CTC subfamily. Part of the 50S ribosomal subunit. Contacts the 5S rRNA.

Its function is as follows. This is one of 3 proteins that mediate the attachment of the 5S rRNA onto the large ribosomal subunit. This Thermus thermophilus protein is Large ribosomal subunit protein bL25 (rplY).